The chain runs to 89 residues: Small ribosomal subunit protein uS15 (89 aa).

The protein belongs to the universal ribosomal protein uS15 family. Part of the 30S ribosomal subunit. Forms a bridge to the 50S subunit in the 70S ribosome, contacting the 23S rRNA.

In terms of biological role, one of the primary rRNA binding proteins, it binds directly to 16S rRNA where it helps nucleate assembly of the platform of the 30S subunit by binding and bridging several RNA helices of the 16S rRNA. Its function is as follows. Forms an intersubunit bridge (bridge B4) with the 23S rRNA of the 50S subunit in the ribosome. This is Small ribosomal subunit protein uS15 from Rhizorhabdus wittichii (strain DSM 6014 / CCUG 31198 / JCM 15750 / NBRC 105917 / EY 4224 / RW1) (Sphingomonas wittichii).